A 343-amino-acid polypeptide reads, in one-letter code: L-threonine 3-dehydrogenase (343 aa).

Cys40 provides a ligand contact to Zn(2+). Active-site charge relay system residues include Thr42 and His45. Zn(2+) contacts are provided by His65, Glu66, Cys95, Cys98, Cys101, and Cys109. Residues Ile177, Asp197, Arg202, 264–266 (LGI), and 288–289 (IY) contribute to the NAD(+) site.

The protein belongs to the zinc-containing alcohol dehydrogenase family. Homotetramer. The cofactor is Zn(2+).

It is found in the cytoplasm. It carries out the reaction L-threonine + NAD(+) = (2S)-2-amino-3-oxobutanoate + NADH + H(+). It functions in the pathway amino-acid degradation; L-threonine degradation via oxydo-reductase pathway; glycine from L-threonine: step 1/2. Catalyzes the NAD(+)-dependent oxidation of L-threonine to 2-amino-3-ketobutyrate. The sequence is that of L-threonine 3-dehydrogenase from Aliivibrio salmonicida (strain LFI1238) (Vibrio salmonicida (strain LFI1238)).